The following is a 385-amino-acid chain: Putative non-inhibitory serpin-Z11 (385 aa).

Residues 324–348 (GTTAVEAMYSPSSPGYSPGYQPPRP) form an RCL region.

The protein belongs to the serpin family.

This Oryza sativa subsp. japonica (Rice) protein is Putative non-inhibitory serpin-Z11.